The following is a 275-amino-acid chain: Formamidopyrimidine-DNA glycosylase (275 aa).

Residue proline 2 is the Schiff-base intermediate with DNA of the active site. Glutamate 3 serves as the catalytic Proton donor. Lysine 58 (proton donor; for beta-elimination activity) is an active-site residue. 2 residues coordinate DNA: histidine 91 and arginine 110. The FPG-type zinc finger occupies 238 to 272 (QVYGQTGKPCPRCGQAIVKLKVGGRGTHICPKCQK). The active-site Proton donor; for delta-elimination activity is arginine 262.

The protein belongs to the FPG family. Monomer. Zn(2+) serves as cofactor.

The catalysed reaction is Hydrolysis of DNA containing ring-opened 7-methylguanine residues, releasing 2,6-diamino-4-hydroxy-5-(N-methyl)formamidopyrimidine.. The enzyme catalyses 2'-deoxyribonucleotide-(2'-deoxyribose 5'-phosphate)-2'-deoxyribonucleotide-DNA = a 3'-end 2'-deoxyribonucleotide-(2,3-dehydro-2,3-deoxyribose 5'-phosphate)-DNA + a 5'-end 5'-phospho-2'-deoxyribonucleoside-DNA + H(+). In terms of biological role, involved in base excision repair of DNA damaged by oxidation or by mutagenic agents. Acts as a DNA glycosylase that recognizes and removes damaged bases. Has a preference for oxidized purines, such as 7,8-dihydro-8-oxoguanine (8-oxoG). Has AP (apurinic/apyrimidinic) lyase activity and introduces nicks in the DNA strand. Cleaves the DNA backbone by beta-delta elimination to generate a single-strand break at the site of the removed base with both 3'- and 5'-phosphates. The sequence is that of Formamidopyrimidine-DNA glycosylase from Streptococcus pyogenes serotype M6 (strain ATCC BAA-946 / MGAS10394).